Reading from the N-terminus, the 618-residue chain is Kelch-like protein 40b (618 aa).

The 68-residue stretch at 33 to 100 (VDCVLKIKDK…LYTSNINVTE (68 aa)) folds into the BTB domain. Residues 135 to 237 (CLAIFRLGLM…PRDYFVKNVE (103 aa)) form the BACK domain. The segment covering 264-284 (PELKKTKNKKSPSEEGQKKGD) has biased composition (basic and acidic residues). A disordered region spans residues 264-297 (PELKKTKNKKSPSEEGQKKGDEEEVEEEEEQEER). Residues 285 to 295 (EEEVEEEEEQE) are compositionally biased toward acidic residues. 5 Kelch repeats span residues 356–408 (QIFV…EAEN), 409–458 (FIFV…SHNE), 459–506 (MIYV…IHKN), 508–553 (IYVV…SVSG), and 555–608 (LYAV…VLGV).

It belongs to the KLHL40 family. Component of the BCR(KLHL40) E3 ubiquitin ligase complex. As to expression, expressed in skeletal muscle. Detected in the eye at much lower levels.

The protein resides in the cytoplasm. It localises to the myofibril. The protein localises to the sarcomere. Its subcellular location is the a band. It is found in the i band. Substrate-specific adapter of a BCR (BTB-CUL3-RBX1) E3 ubiquitin ligase complex. Required for skeletal muscle development. The polypeptide is Kelch-like protein 40b (klhl40b) (Danio rerio (Zebrafish)).